Reading from the N-terminus, the 344-residue chain is Sulfate/thiosulfate import ATP-binding protein CysA (344 aa).

One can recognise an ABC transporter domain in the interval I9–I239. Residue G41–S48 coordinates ATP.

This sequence belongs to the ABC transporter superfamily. Sulfate/tungstate importer (TC 3.A.1.6) family. In terms of assembly, the complex is composed of two ATP-binding proteins (CysA), two transmembrane proteins (CysT and CysW) and a solute-binding protein (CysP).

Its subcellular location is the cell inner membrane. The enzyme catalyses sulfate(out) + ATP + H2O = sulfate(in) + ADP + phosphate + H(+). It carries out the reaction thiosulfate(out) + ATP + H2O = thiosulfate(in) + ADP + phosphate + H(+). Part of the ABC transporter complex CysAWTP involved in sulfate/thiosulfate import. Responsible for energy coupling to the transport system. The polypeptide is Sulfate/thiosulfate import ATP-binding protein CysA (Synechococcus elongatus (strain ATCC 33912 / PCC 7942 / FACHB-805) (Anacystis nidulans R2)).